Here is a 179-residue protein sequence, read N- to C-terminus: tRNA (cytidine(56)-2'-O)-methyltransferase (179 aa).

Residues Leu-82, 112 to 116 (GAEKV), and 130 to 137 (VGNQPHSE) each bind S-adenosyl-L-methionine.

Belongs to the aTrm56 family. In terms of assembly, homodimer.

It localises to the cytoplasm. It catalyses the reaction cytidine(56) in tRNA + S-adenosyl-L-methionine = 2'-O-methylcytidine(56) in tRNA + S-adenosyl-L-homocysteine + H(+). In terms of biological role, specifically catalyzes the AdoMet-dependent 2'-O-ribose methylation of cytidine at position 56 in tRNAs. The protein is tRNA (cytidine(56)-2'-O)-methyltransferase of Methanococcus maripaludis (strain C5 / ATCC BAA-1333).